Consider the following 560-residue polypeptide: Oxygen-dependent choline dehydrogenase (560 aa).

Residue 8 to 37 (DYIIIGAGSAGNVLATRLTEDADVSVLLLE) coordinates FAD. The active-site Proton acceptor is the His-475.

The protein belongs to the GMC oxidoreductase family. It depends on FAD as a cofactor.

It carries out the reaction choline + A = betaine aldehyde + AH2. The enzyme catalyses betaine aldehyde + NAD(+) + H2O = glycine betaine + NADH + 2 H(+). The protein operates within amine and polyamine biosynthesis; betaine biosynthesis via choline pathway; betaine aldehyde from choline (cytochrome c reductase route): step 1/1. In terms of biological role, involved in the biosynthesis of the osmoprotectant glycine betaine. Catalyzes the oxidation of choline to betaine aldehyde and betaine aldehyde to glycine betaine at the same rate. The sequence is that of Oxygen-dependent choline dehydrogenase from Stenotrophomonas maltophilia (strain K279a).